The primary structure comprises 299 residues: MLESHLIIYFLLAVIQFLLGIFTNGIIVVVNGIDLIKHRKMAPLDLLLSCLAVSRIFLQLFIFYVNVIVIFFIEFIMCSANCAILLFVNELELWLATWLGVFYCAKVASVRHPLFIWLKMRISKLVPWMILGSLLYVSMICVFHSKYAGFMVPHFLRNFFSQNATIQKEDTLAIQIFSFVAEFSVPLLIFLVAVLLLIFSLGRHTRQMRNTVAGSRVPGRGAPISALLSILSFLILYFSHCMIKVFLSSLKFHVRRFIFLFFILVIGIYPSGHSLILILGNPKLKQNAKKFLLHSKCCQ.

Over 1–9 (MLESHLIIY) the chain is Extracellular. The chain crosses the membrane as a helical span at residues 10 to 30 (FLLAVIQFLLGIFTNGIIVVV). Over 31 to 55 (NGIDLIKHRKMAPLDLLLSCLAVSR) the chain is Cytoplasmic. The helical transmembrane segment at 56 to 76 (IFLQLFIFYVNVIVIFFIEFI) threads the bilayer. Residues 77–81 (MCSAN) lie on the Extracellular side of the membrane. Residues 82–102 (CAILLFVNELELWLATWLGVF) traverse the membrane as a helical segment. Residues 103-124 (YCAKVASVRHPLFIWLKMRISK) are Cytoplasmic-facing. The chain crosses the membrane as a helical span at residues 125–145 (LVPWMILGSLLYVSMICVFHS). Residues 146–178 (KYAGFMVPHFLRNFFSQNATIQKEDTLAIQIFS) are Extracellular-facing. The N-linked (GlcNAc...) asparagine glycan is linked to Asn163. Residues 179–199 (FVAEFSVPLLIFLVAVLLLIF) form a helical membrane-spanning segment. At 200 to 222 (SLGRHTRQMRNTVAGSRVPGRGA) the chain is on the cytoplasmic side. A helical transmembrane segment spans residues 223 to 243 (PISALLSILSFLILYFSHCMI). Over 244–257 (KVFLSSLKFHVRRF) the chain is Extracellular. A helical membrane pass occupies residues 258 to 278 (IFLFFILVIGIYPSGHSLILI). Topologically, residues 279–299 (LGNPKLKQNAKKFLLHSKCCQ) are cytoplasmic.

Belongs to the G-protein coupled receptor T2R family.

It localises to the membrane. Functionally, receptor that may play a role in the perception of bitterness and is gustducin-linked. May play a role in sensing the chemical composition of the gastrointestinal content. The activity of this receptor may stimulate alpha gustducin, mediate PLC-beta-2 activation and lead to the gating of TRPM5. The chain is Taste receptor type 2 member 1 (TAS2R1) from Pan paniscus (Pygmy chimpanzee).